Consider the following 164-residue polypeptide: Thiol peroxidase (164 aa).

In terms of domain architecture, Thioredoxin spans 18–163 (INEGDFAPDF…FDAALAAYKN (146 aa)). Cys60 serves as the catalytic Cysteine sulfenic acid (-SOH) intermediate. An intrachain disulfide couples Cys60 to Cys93.

Belongs to the peroxiredoxin family. Tpx subfamily. Homodimer.

It carries out the reaction a hydroperoxide + [thioredoxin]-dithiol = an alcohol + [thioredoxin]-disulfide + H2O. Its function is as follows. Thiol-specific peroxidase that catalyzes the reduction of hydrogen peroxide and organic hydroperoxides to water and alcohols, respectively. Plays a role in cell protection against oxidative stress by detoxifying peroxides. In Staphylococcus aureus (strain Mu50 / ATCC 700699), this protein is Thiol peroxidase.